A 257-amino-acid polypeptide reads, in one-letter code: Phosphonates import ATP-binding protein PhnC (257 aa).

An ABC transporter domain is found at 4–248 (IEFKDVRKVY…AFNEIYGRSI (245 aa)). 37–44 (GLSGSGKS) lines the ATP pocket.

This sequence belongs to the ABC transporter superfamily. Phosphonates importer (TC 3.A.1.9.1) family. In terms of assembly, the complex is composed of two ATP-binding proteins (PhnC), two transmembrane proteins (PhnE) and a solute-binding protein (PhnD).

Its subcellular location is the cell membrane. The catalysed reaction is phosphonate(out) + ATP + H2O = phosphonate(in) + ADP + phosphate + H(+). Functionally, part of the ABC transporter complex PhnCDE involved in phosphonates import. Responsible for energy coupling to the transport system. This is Phosphonates import ATP-binding protein PhnC from Staphylococcus saprophyticus subsp. saprophyticus (strain ATCC 15305 / DSM 20229 / NCIMB 8711 / NCTC 7292 / S-41).